Here is a 267-residue protein sequence, read N- to C-terminus: Proteasome assembly chaperone 2 (267 aa).

The protein belongs to the PSMG2 family. As to quaternary structure, component of the 20S proteasome chaperone. Forms a heterodimer with PBA1 that binds to proteasome precursors.

It is found in the cytoplasm. In terms of biological role, involved in 20S proteasome assembly. Required for maximal proteasome activity. Affects the chymotrypsin-like activity of the proteasome. Can be degraded by the proteasome. Involved in the endoplasmic reticulum-associated degradation (ERAD). In Saccharomyces cerevisiae (strain ATCC 204508 / S288c) (Baker's yeast), this protein is Proteasome assembly chaperone 2 (ADD66).